Consider the following 551-residue polypeptide: Chaperonin GroEL (551 aa).

Residues 30-33 (TLGP), Lys-51, 87-91 (DGTTT), Gly-415, 481-483 (NAA), and Asp-497 each bind ATP.

It belongs to the chaperonin (HSP60) family. In terms of assembly, forms a cylinder of 14 subunits composed of two heptameric rings stacked back-to-back. Interacts with the co-chaperonin GroES.

It localises to the cytoplasm. It carries out the reaction ATP + H2O + a folded polypeptide = ADP + phosphate + an unfolded polypeptide.. Together with its co-chaperonin GroES, plays an essential role in assisting protein folding. The GroEL-GroES system forms a nano-cage that allows encapsulation of the non-native substrate proteins and provides a physical environment optimized to promote and accelerate protein folding. In Magnetococcus marinus (strain ATCC BAA-1437 / JCM 17883 / MC-1), this protein is Chaperonin GroEL.